The sequence spans 417 residues: Carboxypeptidase A2 (417 aa).

The first 16 residues, 1 to 16 (MRLTLLLAALLGYIYC), serve as a signal peptide directing secretion. Residues 17–112 (QETFVGDQVL…EMLFNQQRER (96 aa)) constitute a propeptide, activation peptide. The 293-residue stretch at 120–412 (AYHTLEEIYQ…LGLKTIMEHV (293 aa)) folds into the Peptidase M14 domain. Positions 177 and 180 each coordinate Zn(2+). Substrate-binding positions include 177–180 (HARE), arginine 235, and 252–253 (NR). Cysteine 246 and cysteine 269 are joined by a disulfide. Histidine 304 contributes to the Zn(2+) binding site. 305–306 (SY) is a substrate binding site. Cysteine 318 and cysteine 352 form a disulfide bridge. Position 356 (tyrosine 356) interacts with substrate. The Proton donor/acceptor role is filled by glutamate 378.

The protein belongs to the peptidase M14 family. Zn(2+) is required as a cofactor.

The protein localises to the secreted. The enzyme catalyses Similar to that of carboxypeptidase A (EC 3.4.17.1), but with a preference for bulkier C-terminal residues.. Its function is as follows. Carboxypeptidase that catalyzes the release of a C-terminal amino acid, with a preference for large aromatic C-terminal residues. The sequence is that of Carboxypeptidase A2 (Cpa2) from Rattus norvegicus (Rat).